We begin with the raw amino-acid sequence, 93 residues long: RNA-binding protein Hfq (93 aa).

One can recognise a Sm domain in the interval 9–68 (DPYLNALRRERIPVSIYLVNGIKLQGQIESFDQFVILLKNTVSQMVYKHAISTVVPARAI). Positions 70–81 (HNNNSNHAHQAA) are enriched in low complexity. Residues 70–93 (HNNNSNHAHQAAPVQSAEVVEKVE) form a disordered region.

The protein belongs to the Hfq family. Homohexamer.

Its function is as follows. RNA chaperone that binds small regulatory RNA (sRNAs) and mRNAs to facilitate mRNA translational regulation in response to envelope stress, environmental stress and changes in metabolite concentrations. Also binds with high specificity to tRNAs. The sequence is that of RNA-binding protein Hfq from Glaesserella parasuis serovar 5 (strain SH0165) (Haemophilus parasuis).